The chain runs to 152 residues: Putative polyketide cyclase (152 aa).

To polyketide cyclases.

Its pathway is antibiotic biosynthesis; curamycin biosynthesis. This chain is Putative polyketide cyclase (curF), found in Streptomyces cyaneus (Streptomyces curacoi).